A 5088-amino-acid polypeptide reads, in one-letter code: Replicase polyprotein 1ab (5088 aa).

The chain crosses the membrane as a helical span at residues 26–46 (VTNVIQYWTPILTMLLLAIYI). Residues 301–323 (EIEDDTEAEETQKTKRKGKLQPQ) form a disordered region. Transmembrane regions (helical) follow at residues 343–363 (HLTF…MSPT), 1132–1152 (GLFL…AITI), 1156–1176 (TMMM…HLLL), 1201–1221 (YGCL…LAYI), and 1250–1270 (ILIP…VSYV). Active-site for 3C-like proteinase residues include His1434 and Cys1539. A run of 2 helical transmembrane segments spans residues 1729–1749 (FTHT…LFFV) and 1758–1778 (ILSS…YGLV). The tract at residues 3093–3112 (KPNCPMVPSEVPVRNKHKSA) is disordered. One can recognise an ExoN domain in the interval 4351–4616 (MNIVMDDCIC…MTQCIYQSFV (266 aa)). Active-site residues include Asp4362, Glu4364, and Asp4481. Zn(2+)-binding residues include Cys4498, Cys4504, Cys4522, and His4525. Catalysis depends on residues His4599, Asp4604, Lys4880, Asp4969, Lys4998, and Glu5035. Positions 4844–5088 (LNNHAALAKA…RQSVFRYSPK (245 aa)) constitute a Nidovirus-type SAM-dependent 2'-O-MTase domain.

In terms of assembly, homodimer. Post-translationally, specific enzymatic cleavages in vivo by its own protease yield mature proteins. 3CL-PRO is autocatalytically processed.

The protein localises to the membrane. The enzyme catalyses a 5'-end (5'-triphosphoguanosine)-ribonucleoside in mRNA + S-adenosyl-L-methionine = a 5'-end (N(7)-methyl 5'-triphosphoguanosine)-ribonucleoside in mRNA + S-adenosyl-L-homocysteine. It carries out the reaction RNA(n) + a ribonucleoside 5'-triphosphate = RNA(n+1) + diphosphate. It catalyses the reaction ATP + H2O = ADP + phosphate + H(+). The catalysed reaction is a 5'-end (N(7)-methyl 5'-triphosphoguanosine)-ribonucleoside in mRNA + S-adenosyl-L-methionine = a 5'-end (N(7)-methyl 5'-triphosphoguanosine)-(2'-O-methyl-ribonucleoside) in mRNA + S-adenosyl-L-homocysteine + H(+). Cysteine protease responsible for the majority of cleavages of the polyprotein. Recognizes substrates containing the core sequence [NT]-[EHKQSY]-|-[AGNST]. Functionally, the helicase which contains a zinc finger structure displays RNA and DNA duplex-unwinding activities with 5' to 3' polarity. Its function is as follows. RNA-directed RNA polymerase that catalyzes the transcription of viral genomic and subgenomic RNAs. In terms of biological role, catalyzes the RNA N7-guanylyltransferase reaction to methylate the core cap structure GpppN-RNA into the type-0 cap (m)GpppN-RNA. The chain is Replicase polyprotein 1ab from Ochlerotatus harrisoni (CAVV).